A 205-amino-acid polypeptide reads, in one-letter code: Molybdenum cofactor guanylyltransferase (205 aa).

GTP-binding positions include 14-16 (LAG), Lys-27, Asp-77, and Asp-107. Asp-107 lines the Mg(2+) pocket.

It belongs to the MobA family. Monomer. Mg(2+) is required as a cofactor.

It localises to the cytoplasm. It carries out the reaction Mo-molybdopterin + GTP + H(+) = Mo-molybdopterin guanine dinucleotide + diphosphate. Its function is as follows. Transfers a GMP moiety from GTP to Mo-molybdopterin (Mo-MPT) cofactor (Moco or molybdenum cofactor) to form Mo-molybdopterin guanine dinucleotide (Mo-MGD) cofactor. The sequence is that of Molybdenum cofactor guanylyltransferase from Burkholderia ambifaria (strain ATCC BAA-244 / DSM 16087 / CCUG 44356 / LMG 19182 / AMMD) (Burkholderia cepacia (strain AMMD)).